The sequence spans 627 residues: Carnitine O-acetyltransferase (627 aa).

The propeptide occupies 1 to 30 (MDRKQKQAEKARPYGLLKPAALGKIPGRFQ). An N6-succinyllysine modification is found at K94. An N6-acetyllysine; alternate modification is found at K262. K262 carries the post-translational modification N6-succinyllysine; alternate. Position 269 is an N6-acetyllysine (K269). The active-site Proton acceptor is H344. Residues K420 and 424–431 (KSEKISPD) contribute to the CoA site. (R)-carnitine is bound by residues Y453 and S455. S457 lines the CoA pocket. Residue T466 participates in (R)-carnitine binding. A CoA-binding site is contributed by Q556. The short motif at 625–627 (SKL) is the Microbody targeting signal element.

It belongs to the carnitine/choline acetyltransferase family. Monomer.

It localises to the endoplasmic reticulum. Its subcellular location is the peroxisome. It is found in the mitochondrion inner membrane. It catalyses the reaction (R)-carnitine + acetyl-CoA = O-acetyl-(R)-carnitine + CoA. It carries out the reaction propanoyl-CoA + (R)-carnitine = O-propanoyl-(R)-carnitine + CoA. The enzyme catalyses butanoyl-CoA + (R)-carnitine = O-butanoyl-(R)-carnitine + CoA. The catalysed reaction is hexanoyl-CoA + (R)-carnitine = O-hexanoyl-(R)-carnitine + CoA. It catalyses the reaction octanoyl-CoA + (R)-carnitine = O-octanoyl-(R)-carnitine + CoA. It carries out the reaction decanoyl-CoA + (R)-carnitine = O-decanoyl-(R)-carnitine + CoA. The enzyme catalyses 3-methylbutanoyl-CoA + (R)-carnitine = O-3-methylbutanoyl-(R)-carnitine + CoA. The catalysed reaction is 2-methylpropanoyl-CoA + (R)-carnitine = O-isobutanoyl-(R)-carnitine + CoA. It catalyses the reaction 2-methylbutanoyl-CoA + (R)-carnitine = O-2-methylbutanoyl-(R)-carnitine + CoA. It carries out the reaction acetoacetyl-CoA + (R)-carnitine = O-3-oxobutanoyl-(R)-carnitine + CoA. The enzyme catalyses 3-hydroxybutanoyl-CoA + (R)-carnitine = O-3-hydroxybutanoyl-(R)-carnitine + CoA. The catalysed reaction is 4,8-dimethylnonanoyl-CoA + (R)-carnitine = O-4,8-dimethylnonanoyl-(R)-carnitine + CoA. It catalyses the reaction 2,6-dimethylheptanoyl-CoA + (R)-carnitine = O-2,6-dimethylheptanoyl-(R)-carnitine + CoA. Catalyzes the reversible transfer of acyl groups from carnitine to coenzyme A (CoA) and regulates the acyl-CoA/CoA ratio. Also plays a crucial role in the transport of fatty acids for beta-oxidation. Responsible for the synthesis of short- and branched-chain acylcarnitines. Active towards some branched-chain amino acid oxidation pathway (BCAAO) intermediates. Trans-2-enoyl-CoAs and 2-methylacyl-CoAs are poor substrates. The sequence is that of Carnitine O-acetyltransferase (CRAT) from Columba livia (Rock dove).